The primary structure comprises 568 residues: MQKILIEGYDISKDNANPDIKEIRNLDHLPSAKACEYFIHAHGAEFFYQNSHLGLLGKIQSYFMPDPSYLSLTMSSNGGATPMLDITLLNKIQRNTPANQCNIVHIFSCCSGAAQHHLDFIEGNIVLCTYNKASDNNVTQLANSNYETRIKKHSSLIEYIHDNFHLLVASDFSISYKLDNEIYNFSLSSDNIKNMKSIEELPVFLYKEYGTFVKFYQNIYAKYHVSYPEIFNISIGTKPKGLTYADLVRVFTRALTLETYNFNKFSLSKIENLLHQKGLNTDFSVDQAIEQENFELLTSLLNYDNTNIQFYTINKTIDKGNLDILKAVVAHSTTKIESYNIDRAIDKGNLDILKAVVAHSTTKIESYNIDRAIDKGNLDILKAVVAHSTTKIESYNIDRAIDKGNLDILKAVVAHSTTKIESYNIDRAIDKGNLDILKAVVAHSTTKIESYNIDRAIDKGNLDILKAVVAHSTTKIESYNIDRAIDKGNLDILKAVVAHSTTKIESYNFNTVIKIGNLEMLDIILQHSYNSEELVTKYHNYTINNIMPEVNTIPTIEEDVSILGAEIV.

This is an uncharacterized protein from Rickettsia prowazekii (strain Madrid E).